Here is a 120-residue protein sequence, read N- to C-terminus: NAD(P)H-quinone oxidoreductase subunit 3, chloroplastic (120 aa).

The next 3 helical transmembrane spans lie at 9–29 (IFWA…LFSG), 64–84 (MFAL…PWAM), and 88–108 (ILGV…IVGL).

Belongs to the complex I subunit 3 family. NDH is composed of at least 16 different subunits, 5 of which are encoded in the nucleus.

It is found in the plastid. The protein resides in the chloroplast thylakoid membrane. It catalyses the reaction a plastoquinone + NADH + (n+1) H(+)(in) = a plastoquinol + NAD(+) + n H(+)(out). It carries out the reaction a plastoquinone + NADPH + (n+1) H(+)(in) = a plastoquinol + NADP(+) + n H(+)(out). NDH shuttles electrons from NAD(P)H:plastoquinone, via FMN and iron-sulfur (Fe-S) centers, to quinones in the photosynthetic chain and possibly in a chloroplast respiratory chain. The immediate electron acceptor for the enzyme in this species is believed to be plastoquinone. Couples the redox reaction to proton translocation, and thus conserves the redox energy in a proton gradient. The polypeptide is NAD(P)H-quinone oxidoreductase subunit 3, chloroplastic (Spinacia oleracea (Spinach)).